Here is a 126-residue protein sequence, read N- to C-terminus: Aspartate 1-decarboxylase (126 aa).

The active-site Schiff-base intermediate with substrate; via pyruvic acid is Ser-25. The residue at position 25 (Ser-25) is a Pyruvic acid (Ser). Position 57 (Thr-57) interacts with substrate. Tyr-58 acts as the Proton donor in catalysis. 73 to 75 (GAA) lines the substrate pocket.

Belongs to the PanD family. Heterooctamer of four alpha and four beta subunits. Pyruvate is required as a cofactor. Is synthesized initially as an inactive proenzyme, which is activated by self-cleavage at a specific serine bond to produce a beta-subunit with a hydroxyl group at its C-terminus and an alpha-subunit with a pyruvoyl group at its N-terminus.

The protein localises to the cytoplasm. The enzyme catalyses L-aspartate + H(+) = beta-alanine + CO2. Its pathway is cofactor biosynthesis; (R)-pantothenate biosynthesis; beta-alanine from L-aspartate: step 1/1. Functionally, catalyzes the pyruvoyl-dependent decarboxylation of aspartate to produce beta-alanine. The sequence is that of Aspartate 1-decarboxylase from Salmonella arizonae (strain ATCC BAA-731 / CDC346-86 / RSK2980).